Consider the following 337-residue polypeptide: Vegetative-specific protein H5 (337 aa).

An Involved in the stabilization of the negatively charged intermediate by the formation of the oxyanion hole motif is present at residues 88–90 (HGG). Active-site residues include serine 161, aspartate 261, and histidine 291.

Belongs to the 'GDXG' lipolytic enzyme family.

This chain is Vegetative-specific protein H5 (cinB), found in Dictyostelium discoideum (Social amoeba).